The chain runs to 363 residues: Homeobox protein Hox-A2a (363 aa).

Disordered stretches follow at residues 30-88, 98-117, 189-220, and 268-308; these read DSFQ…LPPE, SKRN…GPVC, RMKH…SDEE, and DKNL…LDVS. The span at 31-44 shows a compositional bias: polar residues; sequence SFQSSSIKSSTLSR. An Antp-type hexapeptide motif is present at residues 88–93; it reads EYPWMR. Residues 103 to 113 show a composition bias toward polar residues; sequence LPNSTTTTISN. The homeobox DNA-binding region spans 137 to 196; the sequence is SRRLRTAYTNTQLLELEKEFHFNKYLCRPRRVEIAALLDLTERQVKVWFQNRRMKHKRQT.

It belongs to the Antp homeobox family. Proboscipedia subfamily.

Its subcellular location is the nucleus. In terms of biological role, sequence-specific transcription factor which is part of a developmental regulatory system that provides cells with specific positional identities on the anterior-posterior axis. The polypeptide is Homeobox protein Hox-A2a (hoxa2a) (Takifugu rubripes (Japanese pufferfish)).